A 206-amino-acid chain; its full sequence is Tumor protein D54 (206 aa).

The residue at position 1 (M1) is an N-acetylmethionine. Residues 1-14 are compositionally biased toward polar residues; it reads MDSAGQDINLNSPN. A disordered region spans residues 1 to 24; that stretch reads MDSAGQDINLNSPNKGLLSDSMTD. S3, S12, S19, and S21 each carry phosphoserine. A coiled-coil region spans residues 38-82; that stretch reads VEGLTEAEEEELRAELTKVEEEIVTLRQVLAAKERHCGELKRRLG. Phosphoserine is present on residues S96, S149, and S161. T163 carries the post-translational modification Phosphothreonine. Residue S166 is modified to Phosphoserine. Phosphothreonine is present on T173. The span at 175-185 shows a compositional bias: basic and acidic residues; the sequence is KSKVVGDRENG. The interval 175-206 is disordered; sequence KSKVVGDRENGSDSLPSSAGSGDKPLSDPAPF. S192 and S195 each carry phosphoserine.

It belongs to the TPD52 family. In terms of assembly, forms a homodimer or heterodimer with other members of the family. Interacts with MAL2.

The protein is Tumor protein D54 (TPD52L2) of Pongo abelii (Sumatran orangutan).